The chain runs to 688 residues: Lectin-domain containing receptor kinase VI.3 (688 aa).

The first 14 residues, Met1 to Ala14, serve as a signal peptide directing secretion. The Extracellular segment spans residues Gln15–Ala306. Residues Pro22–Ser271 form a legume-lectin like region. The chain crosses the membrane as a helical span at residues Leu307–Met327. Residues Tyr328–Arg688 lie on the Cytoplasmic side of the membrane. The Protein kinase domain occupies Phe361–Ile640. ATP contacts are provided by residues Val367–Val375 and Lys391. The Proton acceptor role is filled by Asp490. Residues Val662 to Arg688 form a disordered region.

This sequence in the C-terminal section; belongs to the protein kinase superfamily. Ser/Thr protein kinase family. In the N-terminal section; belongs to the leguminous lectin family.

The protein resides in the cell membrane. The catalysed reaction is L-seryl-[protein] + ATP = O-phospho-L-seryl-[protein] + ADP + H(+). The enzyme catalyses L-threonyl-[protein] + ATP = O-phospho-L-threonyl-[protein] + ADP + H(+). In terms of biological role, involved in negative regulation of abscisic acid response in seed germination. This chain is Lectin-domain containing receptor kinase VI.3 (LECRK63), found in Arabidopsis thaliana (Mouse-ear cress).